A 353-amino-acid chain; its full sequence is Protein RecA (353 aa).

75–82 (GPESSGKT) contacts ATP.

This sequence belongs to the RecA family.

Its subcellular location is the cytoplasm. Functionally, can catalyze the hydrolysis of ATP in the presence of single-stranded DNA, the ATP-dependent uptake of single-stranded DNA by duplex DNA, and the ATP-dependent hybridization of homologous single-stranded DNAs. It interacts with LexA causing its activation and leading to its autocatalytic cleavage. This Cupriavidus necator (Alcaligenes eutrophus) protein is Protein RecA.